The sequence spans 66 residues: Large ribosomal subunit protein uL29 (66 aa).

Belongs to the universal ribosomal protein uL29 family.

The chain is Large ribosomal subunit protein uL29 from Mesorhizobium japonicum (strain LMG 29417 / CECT 9101 / MAFF 303099) (Mesorhizobium loti (strain MAFF 303099)).